The sequence spans 306 residues: Acetyl-coenzyme A carboxylase carboxyl transferase subunit beta (306 aa).

In terms of domain architecture, CoA carboxyltransferase N-terminal spans L27–P296. Zn(2+)-binding residues include C31, C34, C50, and C53. The segment at C31–C53 adopts a C4-type zinc-finger fold.

The protein belongs to the AccD/PCCB family. As to quaternary structure, acetyl-CoA carboxylase is a heterohexamer composed of biotin carboxyl carrier protein (AccB), biotin carboxylase (AccC) and two subunits each of ACCase subunit alpha (AccA) and ACCase subunit beta (AccD). The cofactor is Zn(2+).

Its subcellular location is the cytoplasm. The catalysed reaction is N(6)-carboxybiotinyl-L-lysyl-[protein] + acetyl-CoA = N(6)-biotinyl-L-lysyl-[protein] + malonyl-CoA. Its pathway is lipid metabolism; malonyl-CoA biosynthesis; malonyl-CoA from acetyl-CoA: step 1/1. Component of the acetyl coenzyme A carboxylase (ACC) complex. Biotin carboxylase (BC) catalyzes the carboxylation of biotin on its carrier protein (BCCP) and then the CO(2) group is transferred by the transcarboxylase to acetyl-CoA to form malonyl-CoA. The polypeptide is Acetyl-coenzyme A carboxylase carboxyl transferase subunit beta (Pseudomonas fluorescens (strain Pf0-1)).